The following is a 76-amino-acid chain: Exodeoxyribonuclease 7 small subunit (76 aa).

Belongs to the XseB family. Heterooligomer composed of large and small subunits.

The protein resides in the cytoplasm. The catalysed reaction is Exonucleolytic cleavage in either 5'- to 3'- or 3'- to 5'-direction to yield nucleoside 5'-phosphates.. In terms of biological role, bidirectionally degrades single-stranded DNA into large acid-insoluble oligonucleotides, which are then degraded further into small acid-soluble oligonucleotides. In Bacillus cereus (strain G9842), this protein is Exodeoxyribonuclease 7 small subunit.